Here is a 460-residue protein sequence, read N- to C-terminus: MATGKIIQVIGAVVDVEFPQDAVPKVYNALEVENGANKLVLEVQQQLGGGVVRCIAMGTSDGLRRGLKVTDLDHPIEVPVGKATLGRIMNVLGEPIDMKGDIGEEERWAIHRPAPSYEDLANSQDLLETGIKVMDLICPFAKGGKVGLFGGAGVGKTVNMMELIRNIAIEHSGYSVFAGVGERTREGNDFYHEMNDSNVLDKVSLVYGQMNEPPGNRLRVALTGLTMAEKFRDEGRDVLLFVDNIYRYTLAGTEVSALLGRMPSAVGYQPTLAEEMGVLQERITSTKTGSITSVQAVYVPADDLTDPSPATTFAHLDATVVLSRNIASLGIYPAVDPLDSTSRQLDPLVVGQEHYDVARGVQSILQRYQELKDIIAILGMDELSEEDKLVVSRARKIQRFLSQPFFVAEVFTGSPGKFVSLKDTIRGFKGIMDGDYDHLPEQAFYMVGTIEEAVEKAKKL.

150–157 is an ATP binding site; that stretch reads GGAGVGKT.

It belongs to the ATPase alpha/beta chains family. As to quaternary structure, F-type ATPases have 2 components, CF(1) - the catalytic core - and CF(0) - the membrane proton channel. CF(1) has five subunits: alpha(3), beta(3), gamma(1), delta(1), epsilon(1). CF(0) has three main subunits: a(1), b(2) and c(9-12). The alpha and beta chains form an alternating ring which encloses part of the gamma chain. CF(1) is attached to CF(0) by a central stalk formed by the gamma and epsilon chains, while a peripheral stalk is formed by the delta and b chains.

The protein localises to the cell inner membrane. It catalyses the reaction ATP + H2O + 4 H(+)(in) = ADP + phosphate + 5 H(+)(out). Produces ATP from ADP in the presence of a proton gradient across the membrane. The catalytic sites are hosted primarily by the beta subunits. This is ATP synthase subunit beta from Serratia proteamaculans (strain 568).